The following is a 381-amino-acid chain: Homoserine O-succinyltransferase (381 aa).

An AB hydrolase-1 domain is found at 45–360; that stretch reads NAVLVCHALN…PHGHDAFLLD (316 aa). Ser-151 (nucleophile) is an active-site residue. Arg-221 provides a ligand contact to substrate. Residues Asp-321 and His-354 contribute to the active site. Asp-355 is a substrate binding site.

This sequence belongs to the AB hydrolase superfamily. MetX family. Homodimer.

The protein resides in the cytoplasm. The enzyme catalyses L-homoserine + succinyl-CoA = O-succinyl-L-homoserine + CoA. It functions in the pathway amino-acid biosynthesis; L-methionine biosynthesis via de novo pathway; O-succinyl-L-homoserine from L-homoserine: step 1/1. Transfers a succinyl group from succinyl-CoA to L-homoserine, forming succinyl-L-homoserine. The polypeptide is Homoserine O-succinyltransferase (Burkholderia lata (strain ATCC 17760 / DSM 23089 / LMG 22485 / NCIMB 9086 / R18194 / 383)).